Here is a 362-residue protein sequence, read N- to C-terminus: 3-dehydroquinate synthase (362 aa).

NAD(+)-binding positions include 71–76 (DGEQNK), 105–109 (GVIGD), 129–130 (TT), Lys142, and Lys151. 3 residues coordinate Zn(2+): Glu184, His247, and His264.

The protein belongs to the sugar phosphate cyclases superfamily. Dehydroquinate synthase family. It depends on Co(2+) as a cofactor. The cofactor is Zn(2+). Requires NAD(+) as cofactor.

The protein localises to the cytoplasm. It catalyses the reaction 7-phospho-2-dehydro-3-deoxy-D-arabino-heptonate = 3-dehydroquinate + phosphate. It functions in the pathway metabolic intermediate biosynthesis; chorismate biosynthesis; chorismate from D-erythrose 4-phosphate and phosphoenolpyruvate: step 2/7. Catalyzes the conversion of 3-deoxy-D-arabino-heptulosonate 7-phosphate (DAHP) to dehydroquinate (DHQ). The chain is 3-dehydroquinate synthase from Blochmanniella pennsylvanica (strain BPEN).